The chain runs to 252 residues: Hydroxyacylglutathione hydrolase (252 aa).

Zn(2+) is bound by residues His-54, His-56, Asp-58, His-59, His-111, Asp-128, and His-166.

Belongs to the metallo-beta-lactamase superfamily. Glyoxalase II family. In terms of assembly, monomer. The cofactor is Zn(2+).

It carries out the reaction an S-(2-hydroxyacyl)glutathione + H2O = a 2-hydroxy carboxylate + glutathione + H(+). Its pathway is secondary metabolite metabolism; methylglyoxal degradation; (R)-lactate from methylglyoxal: step 2/2. In terms of biological role, thiolesterase that catalyzes the hydrolysis of S-D-lactoyl-glutathione to form glutathione and D-lactic acid. This is Hydroxyacylglutathione hydrolase from Photobacterium profundum (strain SS9).